The following is a 732-amino-acid chain: Eukaryotic translation initiation factor 3 subunit B (732 aa).

A sufficient for interaction with HCR1 and TIF32 region spans residues 1–94 (MTTLESLKIE…LFIEMESVSA (94 aa)). Residues 1–219 (MTTLESLKIE…GVTSWGGPNF (219 aa)) are sufficient for interaction with PIC8. Positions 37–120 (NFLVVDGAPV…HRLLVNSLND (84 aa)) constitute an RRM domain. WD repeat units lie at residues 185–224 (ARKNWSNDVVKFSPKGTYLLSFHDQGVTSWGGPNFDRLKR), 237–280 (PTEK…LMKT), 439–481 (EMKD…KFFA), and 507–554 (VDQQ…KTLN).

The protein belongs to the eIF-3 subunit B family. In terms of assembly, component of the eukaryotic translation initiation factor 3 (eIF-3) complex.

The protein localises to the cytoplasm. RNA-binding component of the eukaryotic translation initiation factor 3 (eIF-3) complex, which is involved in protein synthesis of a specialized repertoire of mRNAs and, together with other initiation factors, stimulates binding of mRNA and methionyl-tRNAi to the 40S ribosome. The eIF-3 complex specifically targets and initiates translation of a subset of mRNAs involved in cell proliferation. This chain is Eukaryotic translation initiation factor 3 subunit B, found in Kluyveromyces lactis (strain ATCC 8585 / CBS 2359 / DSM 70799 / NBRC 1267 / NRRL Y-1140 / WM37) (Yeast).